Here is a 354-residue protein sequence, read N- to C-terminus: Ribosomal RNA large subunit methyltransferase M (354 aa).

Residues Ser-183, 216–219 (SPGG), Asp-235, Asp-255, and Asp-271 each bind S-adenosyl-L-methionine. The active-site Proton acceptor is Lys-300.

Belongs to the class I-like SAM-binding methyltransferase superfamily. RNA methyltransferase RlmE family. RlmM subfamily. As to quaternary structure, monomer.

The protein resides in the cytoplasm. The enzyme catalyses cytidine(2498) in 23S rRNA + S-adenosyl-L-methionine = 2'-O-methylcytidine(2498) in 23S rRNA + S-adenosyl-L-homocysteine + H(+). Its function is as follows. Catalyzes the 2'-O-methylation at nucleotide C2498 in 23S rRNA. The chain is Ribosomal RNA large subunit methyltransferase M from Pseudomonas putida (strain ATCC 700007 / DSM 6899 / JCM 31910 / BCRC 17059 / LMG 24140 / F1).